Reading from the N-terminus, the 972-residue chain is Aminopeptidase Ey (972 aa).

Residues alanine 2–serine 10 lie on the Cytoplasmic side of the membrane. The helical; Signal-anchor for type II membrane protein transmembrane segment at valine 11–valine 31 threads the bilayer. The Extracellular segment spans residues valine 32 to serine 972. Positions tyrosine 33–asparagine 72 are cytosolic Ser/Thr-rich junction. The tract at residues lysine 37–arginine 77 is disordered. N-linked (GlcNAc...) asparagine glycosylation occurs at asparagine 38. Residues serine 47 to alanine 70 are compositionally biased toward low complexity. The tract at residues asparagine 73–alanine 967 is metalloprotease. N-linked (GlcNAc...) asparagine glycosylation is found at asparagine 110, asparagine 132, asparagine 147, asparagine 206, asparagine 269, and asparagine 296. Glycine 355–asparagine 359 contacts substrate. Zn(2+) is bound at residue histidine 391. Glutamate 392 acts as the Proton acceptor in catalysis. 2 residues coordinate Zn(2+): histidine 395 and glutamate 414. Residues asparagine 513, asparagine 574, asparagine 584, asparagine 628, asparagine 684, and asparagine 742 are each glycosylated (N-linked (GlcNAc...) asparagine). A disulfide bond links cysteine 764 and cysteine 771. The N-linked (GlcNAc...) asparagine glycan is linked to asparagine 785. A disulfide bond links cysteine 801 and cysteine 837.

Belongs to the peptidase M1 family. In terms of assembly, homodimer. Zn(2+) is required as a cofactor. As to expression, detected in the plasma and granule fractions of egg yolk (at protein level).

Its subcellular location is the cell membrane. The enzyme catalyses Differs from other aminopeptidases in broad specificity for amino acids in the P1 position and the ability to hydrolyze peptides of four or five residues that contain Pro in the P1' position.. Functionally, broad specificity aminopeptidase. Degrades a variety of peptides possessing various N-terminal amino acids including hydrophobic, basic and acidic amino acids. Preferentially hydrolyzes small peptides consisting of 4 or 5 amino acids. Hydrolyzes the N-terminal Xaa-Pro bonds in the chicken brain peptide Leu-Pro-Leu-Arg-PheNH2, the substance P fragment Arg-Pro-Lys-Pro and the bradykinin fragment Arg-Pro-Pro-Gly-Phe. Hydrolyzes the N-formylated peptides fMet-Leu-Phe, fMet-Ala-Gly-Ser-Glu and fMet-Nle-Leu-Phe-Nle-Tyr-Lys, but does not hydrolyze peptides with acetylation or pyroglutamic acid at N-terminus. Does not hydrolyze large peptides such as complete substance P, bradykinin or schistoFLRFamide. The polypeptide is Aminopeptidase Ey (ANPEP) (Gallus gallus (Chicken)).